A 308-amino-acid chain; its full sequence is Aspartate carbamoyltransferase catalytic subunit (308 aa).

Positions 55 and 56 each coordinate carbamoyl phosphate. Residue K83 participates in L-aspartate binding. The carbamoyl phosphate site is built by R105, H133, and Q136. Positions 166 and 223 each coordinate L-aspartate. Residues G264 and P265 each coordinate carbamoyl phosphate.

It belongs to the aspartate/ornithine carbamoyltransferase superfamily. ATCase family. As to quaternary structure, heterododecamer (2C3:3R2) of six catalytic PyrB chains organized as two trimers (C3), and six regulatory PyrI chains organized as three dimers (R2).

It catalyses the reaction carbamoyl phosphate + L-aspartate = N-carbamoyl-L-aspartate + phosphate + H(+). The protein operates within pyrimidine metabolism; UMP biosynthesis via de novo pathway; (S)-dihydroorotate from bicarbonate: step 2/3. Functionally, catalyzes the condensation of carbamoyl phosphate and aspartate to form carbamoyl aspartate and inorganic phosphate, the committed step in the de novo pyrimidine nucleotide biosynthesis pathway. The polypeptide is Aspartate carbamoyltransferase catalytic subunit (Salinispora arenicola (strain CNS-205)).